A 1205-amino-acid polypeptide reads, in one-letter code: Chromosome partition protein Smc (1205 aa).

32–39 (PNGSGKSN) is a binding site for ATP. Coiled-coil stretches lie at residues 169-288 (KHRK…SIQH) and 330-499 (EELE…GLQR). One can recognise an SMC hinge domain in the interval 514 to 628 (GLFGSIAQLV…VNDLTEAMGL (115 aa)). Coiled coils occupy residues 661–771 (LEVT…AQET), 802–836 (AVRT…RAQQ), and 979–1033 (DRVT…KDLL).

The protein belongs to the SMC family. Homodimer.

The protein localises to the cytoplasm. Functionally, required for chromosome condensation and partitioning. In Mycobacterium tuberculosis (strain ATCC 25618 / H37Rv), this protein is Chromosome partition protein Smc.